Here is a 288-residue protein sequence, read N- to C-terminus: Ribosome biogenesis GTPase A (288 aa).

The region spanning 14 to 179 (RRQVTEKLKL…LLDTPGILWP (166 aa)) is the CP-type G domain. GTP contacts are provided by residues 58-61 (NKVD), 131-136 (NVGKST), and glycine 175.

Belongs to the TRAFAC class YlqF/YawG GTPase family. MTG1 subfamily. As to quaternary structure, interacts with ctc. Interacts with the immature 50S ribosome subunit. 2 molecules of rbgA bind to one 50S subunit.

The protein localises to the cytoplasm. Functionally, essential protein that is required for a late step of 50S ribosomal subunit assembly. Has GTPase activity that is stimulated by interaction with the immature 50S ribosome subunit. Binds to the 23S rRNA. Required for the association of ribosomal proteins rplP and rpmA with the large subunit. The sequence is that of Ribosome biogenesis GTPase A from Priestia megaterium (strain DSM 319 / IMG 1521) (Bacillus megaterium).